The primary structure comprises 295 residues: UDP-N-acetylenolpyruvoylglucosamine reductase (295 aa).

Residues 24-188 (KVGGNAEIFF…LKAVFKINKG (165 aa)) enclose the FAD-binding PCMH-type domain. Arg-168 is an active-site residue. The active-site Proton donor is Ser-217. Residue Glu-287 is part of the active site.

The protein belongs to the MurB family. It depends on FAD as a cofactor.

The protein resides in the cytoplasm. It catalyses the reaction UDP-N-acetyl-alpha-D-muramate + NADP(+) = UDP-N-acetyl-3-O-(1-carboxyvinyl)-alpha-D-glucosamine + NADPH + H(+). It functions in the pathway cell wall biogenesis; peptidoglycan biosynthesis. Functionally, cell wall formation. This is UDP-N-acetylenolpyruvoylglucosamine reductase from Rickettsia massiliae (strain Mtu5).